A 562-amino-acid polypeptide reads, in one-letter code: Bacillolysin (562 aa).

The signal sequence occupies residues 1 to 24 (MKKKKQALKVLLSVGILSSSFAFA). The propeptide at 25–245 (HTSSAAPNNV…KQAAKPAAKP (221 aa)) is activation peptide. The Ca(2+) site is built by Asp303, Asp305, and Asp384. His388 contributes to the Zn(2+) binding site. Glu389 is a catalytic residue. Residues His392 and Glu412 each coordinate Zn(2+). Residues Glu423, Asn429, Asp431, Glu433, Glu436, Tyr439, Thr440, and Asp446 each coordinate Ca(2+). His477 (proton donor) is an active-site residue.

It belongs to the peptidase M4 family. It depends on Ca(2+) as a cofactor. Requires Zn(2+) as cofactor.

Its subcellular location is the secreted. The catalysed reaction is Similar, but not identical, to that of thermolysin.. Functionally, extracellular zinc metalloprotease. This is Bacillolysin (nprM) from Priestia megaterium (strain DSM 319 / IMG 1521) (Bacillus megaterium).